The following is a 43-amino-acid chain: Protein PsbN (43 aa).

The chain crosses the membrane as a helical span at residues 7 to 27 (VAIFISCLLVSFTGYALYTAF).

Belongs to the PsbN family.

It localises to the plastid. The protein localises to the chloroplast thylakoid membrane. In terms of biological role, may play a role in photosystem I and II biogenesis. This is Protein PsbN from Huperzia lucidula (Shining clubmoss).